A 575-amino-acid polypeptide reads, in one-letter code: Isocitrate dehydrogenase kinase/phosphatase (575 aa).

Residues 315–321 (APGVKGM) and lysine 336 each bind ATP. Aspartate 371 is a catalytic residue.

The protein belongs to the AceK family.

It is found in the cytoplasm. It catalyses the reaction L-seryl-[isocitrate dehydrogenase] + ATP = O-phospho-L-seryl-[isocitrate dehydrogenase] + ADP + H(+). In terms of biological role, bifunctional enzyme which can phosphorylate or dephosphorylate isocitrate dehydrogenase (IDH) on a specific serine residue. This is a regulatory mechanism which enables bacteria to bypass the Krebs cycle via the glyoxylate shunt in response to the source of carbon. When bacteria are grown on glucose, IDH is fully active and unphosphorylated, but when grown on acetate or ethanol, the activity of IDH declines drastically concomitant with its phosphorylation. The chain is Isocitrate dehydrogenase kinase/phosphatase from Yersinia enterocolitica serotype O:8 / biotype 1B (strain NCTC 13174 / 8081).